A 416-amino-acid chain; its full sequence is Gamma-glutamyl phosphate reductase (416 aa).

This sequence belongs to the gamma-glutamyl phosphate reductase family.

It localises to the cytoplasm. It carries out the reaction L-glutamate 5-semialdehyde + phosphate + NADP(+) = L-glutamyl 5-phosphate + NADPH + H(+). It participates in amino-acid biosynthesis; L-proline biosynthesis; L-glutamate 5-semialdehyde from L-glutamate: step 2/2. Functionally, catalyzes the NADPH-dependent reduction of L-glutamate 5-phosphate into L-glutamate 5-semialdehyde and phosphate. The product spontaneously undergoes cyclization to form 1-pyrroline-5-carboxylate. This chain is Gamma-glutamyl phosphate reductase, found in Salmonella newport (strain SL254).